We begin with the raw amino-acid sequence, 268 residues long: UPF0328 protein ECU03_0040 (268 aa).

This sequence belongs to the UPF0328 family.

The polypeptide is UPF0328 protein ECU03_0040 (Encephalitozoon cuniculi (strain GB-M1) (Microsporidian parasite)).